Here is a 353-residue protein sequence, read N- to C-terminus: Photosystem II D2 protein (353 aa).

Residue T2 is modified to N-acetylthreonine. A Phosphothreonine modification is found at T2. The helical transmembrane segment at 41-61 (CAYFSLGGWFTGTTFVTSWYT) threads the bilayer. H118 contributes to the chlorophyll a binding site. Residues 125–141 (GFMLRQFELARSVQLRP) form a helical membrane-spanning segment. Pheophytin a contacts are provided by Q130 and N143. The helical transmembrane segment at 153–166 (VFVSVFLIYPLGQS) threads the bilayer. H198 is a binding site for chlorophyll a. The helical transmembrane segment at 208–228 (AALLCAIHGATVENTLFEDGD) threads the bilayer. Residues H215 and F262 each contribute to the a plastoquinone site. H215 serves as a coordination point for Fe cation. Fe cation is bound at residue H269. A helical membrane pass occupies residues 279–295 (GLWMSAIGVVGLALNLR).

The protein belongs to the reaction center PufL/M/PsbA/D family. PSII is composed of 1 copy each of membrane proteins PsbA, PsbB, PsbC, PsbD, PsbE, PsbF, PsbH, PsbI, PsbJ, PsbK, PsbL, PsbM, PsbT, PsbX, PsbY, PsbZ, Psb30/Ycf12, at least 3 peripheral proteins of the oxygen-evolving complex and a large number of cofactors. It forms dimeric complexes. The D1/D2 heterodimer binds P680, chlorophylls that are the primary electron donor of PSII, and subsequent electron acceptors. It shares a non-heme iron and each subunit binds pheophytin, quinone, additional chlorophylls, carotenoids and lipids. There is also a Cl(-1) ion associated with D1 and D2, which is required for oxygen evolution. The PSII complex binds additional chlorophylls, carotenoids and specific lipids. serves as cofactor.

It is found in the plastid. It localises to the chloroplast thylakoid membrane. It catalyses the reaction 2 a plastoquinone + 4 hnu + 2 H2O = 2 a plastoquinol + O2. Functionally, photosystem II (PSII) is a light-driven water:plastoquinone oxidoreductase that uses light energy to abstract electrons from H(2)O, generating O(2) and a proton gradient subsequently used for ATP formation. It consists of a core antenna complex that captures photons, and an electron transfer chain that converts photonic excitation into a charge separation. The D1/D2 (PsbA/PsbD) reaction center heterodimer binds P680, the primary electron donor of PSII as well as several subsequent electron acceptors. D2 is needed for assembly of a stable PSII complex. This chain is Photosystem II D2 protein, found in Physcomitrium patens (Spreading-leaved earth moss).